Here is a 351-residue protein sequence, read N- to C-terminus: Probable dual-specificity RNA methyltransferase RlmN (351 aa).

The active-site Proton acceptor is the Glu-92. Residues 98 to 332 enclose the Radical SAM core domain; that stretch reads TDQRLTVCIS…VSLRASRGLD (235 aa). Cys-105 and Cys-337 are joined by a disulfide. Residues Cys-112, Cys-116, and Cys-119 each contribute to the [4Fe-4S] cluster site. Residues 159-160, Ser-189, 218-220, and Asn-294 each bind S-adenosyl-L-methionine; these read GE and SLH. The active-site S-methylcysteine intermediate is the Cys-337.

It belongs to the radical SAM superfamily. RlmN family. Requires [4Fe-4S] cluster as cofactor.

The protein localises to the cytoplasm. The enzyme catalyses adenosine(2503) in 23S rRNA + 2 reduced [2Fe-2S]-[ferredoxin] + 2 S-adenosyl-L-methionine = 2-methyladenosine(2503) in 23S rRNA + 5'-deoxyadenosine + L-methionine + 2 oxidized [2Fe-2S]-[ferredoxin] + S-adenosyl-L-homocysteine. It catalyses the reaction adenosine(37) in tRNA + 2 reduced [2Fe-2S]-[ferredoxin] + 2 S-adenosyl-L-methionine = 2-methyladenosine(37) in tRNA + 5'-deoxyadenosine + L-methionine + 2 oxidized [2Fe-2S]-[ferredoxin] + S-adenosyl-L-homocysteine. In terms of biological role, specifically methylates position 2 of adenine 2503 in 23S rRNA and position 2 of adenine 37 in tRNAs. The sequence is that of Probable dual-specificity RNA methyltransferase RlmN from Synechococcus sp. (strain CC9902).